A 264-amino-acid chain; its full sequence is ATP synthase subunit a (264 aa).

5 consecutive transmembrane segments (helical) span residues 39 to 59, 97 to 117, 139 to 159, 205 to 225, and 239 to 259; these read LDTL…FYII, VAPL…MDLV, TADP…VVFY, LFGN…LPWW, and LLVI…YISL.

Belongs to the ATPase A chain family. As to quaternary structure, F-type ATPases have 2 components, CF(1) - the catalytic core - and CF(0) - the membrane proton channel. CF(1) has five subunits: alpha(3), beta(3), gamma(1), delta(1), epsilon(1). CF(0) has three main subunits: a(1), b(2) and c(9-12). The alpha and beta chains form an alternating ring which encloses part of the gamma chain. CF(1) is attached to CF(0) by a central stalk formed by the gamma and epsilon chains, while a peripheral stalk is formed by the delta and b chains.

Its subcellular location is the cell inner membrane. Its function is as follows. Key component of the proton channel; it plays a direct role in the translocation of protons across the membrane. The protein is ATP synthase subunit a of Coxiella burnetii (strain CbuG_Q212) (Coxiella burnetii (strain Q212)).